The primary structure comprises 392 residues: Protein FAM185A (392 aa).

The tract at residues 39–60 (YSSGGSERWPGSETEVPPPGPG) is disordered.

The protein is Protein FAM185A (FAM185A) of Homo sapiens (Human).